Consider the following 101-residue polypeptide: Large ribosomal subunit protein eL43 (101 aa).

The C4-type zinc finger occupies 40 to 62; that stretch reads CPSCRSLVRLKRLAFGIWQCPKC.

The protein belongs to the eukaryotic ribosomal protein eL43 family. Zn(2+) is required as a cofactor.

This is Large ribosomal subunit protein eL43 from Pyrobaculum islandicum (strain DSM 4184 / JCM 9189 / GEO3).